Here is a 631-residue protein sequence, read N- to C-terminus: Phosphomethylpyrimidine synthase (631 aa).

Residues Asn239, Met268, Tyr297, His333, 353–355 (SRG), 394–397 (DGLR), and Glu433 contribute to the substrate site. His437 is a binding site for Zn(2+). Tyr460 lines the substrate pocket. His501 contacts Zn(2+). Residues Cys581, Cys584, and Cys589 each contribute to the [4Fe-4S] cluster site.

Belongs to the ThiC family. Homodimer. Requires [4Fe-4S] cluster as cofactor.

The enzyme catalyses 5-amino-1-(5-phospho-beta-D-ribosyl)imidazole + S-adenosyl-L-methionine = 4-amino-2-methyl-5-(phosphooxymethyl)pyrimidine + CO + 5'-deoxyadenosine + formate + L-methionine + 3 H(+). The protein operates within cofactor biosynthesis; thiamine diphosphate biosynthesis. In terms of biological role, catalyzes the synthesis of the hydroxymethylpyrimidine phosphate (HMP-P) moiety of thiamine from aminoimidazole ribotide (AIR) in a radical S-adenosyl-L-methionine (SAM)-dependent reaction. This Escherichia coli O81 (strain ED1a) protein is Phosphomethylpyrimidine synthase.